A 334-amino-acid polypeptide reads, in one-letter code: Protein-methionine-sulfoxide reductase catalytic subunit MsrP (334 aa).

Residues 1–44 (MKKVSRLTEADVTAESAFFMQRRQVLKALGITTAALSLPTAAHA) constitute a signal peptide (tat-type signal). Mo-molybdopterin is bound by residues asparagine 88, 91 to 92 (YE), cysteine 146, threonine 181, asparagine 233, arginine 238, and 249 to 251 (GIK).

Belongs to the MsrP family. Heterodimer of a catalytic subunit (MsrP) and a heme-binding subunit (MsrQ). Requires Mo-molybdopterin as cofactor. Predicted to be exported by the Tat system. The position of the signal peptide cleavage has not been experimentally proven.

Its subcellular location is the periplasm. The catalysed reaction is L-methionyl-[protein] + a quinone + H2O = L-methionyl-(S)-S-oxide-[protein] + a quinol. It carries out the reaction L-methionyl-[protein] + a quinone + H2O = L-methionyl-(R)-S-oxide-[protein] + a quinol. In terms of biological role, part of the MsrPQ system that repairs oxidized periplasmic proteins containing methionine sulfoxide residues (Met-O), using respiratory chain electrons. Thus protects these proteins from oxidative-stress damage caused by reactive species of oxygen and chlorine generated by the host defense mechanisms. MsrPQ is essential for the maintenance of envelope integrity under bleach stress, rescuing a wide series of structurally unrelated periplasmic proteins from methionine oxidation. The catalytic subunit MsrP is non-stereospecific, being able to reduce both (R-) and (S-) diastereoisomers of methionine sulfoxide. The sequence is that of Protein-methionine-sulfoxide reductase catalytic subunit MsrP from Cronobacter sakazakii (strain ATCC BAA-894) (Enterobacter sakazakii).